The following is a 225-amino-acid chain: MVTHSKFPAAGMSRPLDTSLRLKTFSSKSEYQLVVNAVRKLQESGFYWSAVTGGEANLLLSAEPAGTFLIRDSSDQRHFFTLSVETQSGTKNLRIQCEGGSFSLQSDPRSTQPVPRFDCVLKLVHHYMPPPGAPSFSLPPTEPSFEVQEQPPAQALPGGTPKRAYYIYSGGEKIPLVLSRPLSSNVATLQHLCRKTVNGHLDSYEKVTQLPGPIREFLDQYDAPL.

The tract at residues 22–33 (LKTFSSKSEYQL) is kinase inhibitory region (KIR). Residues 34–45 (VVNAVRKLQESG) form an extended SH2 subdomain (ESS) region. Residues 46 to 142 (FYWSAVTGGE…APSFSLPPTE (97 aa)) enclose the SH2 domain. The segment at 141–160 (TEPSFEVQEQPPAQALPGGT) is disordered. One can recognise an SOCS box domain in the interval 177–224 (VLSRPLSSNVATLQHLCRKTVNGHLDSYEKVTQLPGPIREFLDQYDAP).

As to quaternary structure, interacts with multiple activated proteins of the tyrosine kinase signaling pathway including IGF1 receptor, insulin receptor and JAK2. Binding to JAK2 is mediated through the KIR and SH2 domains to a phosphorylated tyrosine residue within the JAK2 JH1 domain. Binds specific activated tyrosine residues of the leptin, EPO, IL12, GSCF and gp130 receptors. Interaction with CSNK1E stabilize SOCS3 protein. Component of the probable ECS(SOCS3) E3 ubiquitin-protein ligase complex which contains CUL5, RNF7/RBX2, Elongin BC complex and SOCS3. Interacts with CUL5, RNF7, ELOB and ELOC. Interacts with FGFR3. Interacts with INSR. Interacts with BCL10; this interaction may interfere with BCL10-binding with PELI2. Interacts with NOD2 (via CARD domain); the interaction promotes NOD2 degradation. In terms of processing, phosphorylated on tyrosine residues after stimulation by the cytokines, IL-2, EPO or IGF1.

The protein operates within protein modification; protein ubiquitination. SOCS family proteins form part of a classical negative feedback system that regulates cytokine signal transduction. SOCS3 is involved in negative regulation of cytokines that signal through the JAK/STAT pathway. Inhibits cytokine signal transduction by binding to tyrosine kinase receptors including IL6ST/gp130, LIF, erythropoietin, insulin, IL12, GCSF and leptin receptors. Binding to JAK2 inhibits its kinase activity and regulates IL6 signaling. Suppresses fetal liver erythropoiesis. Regulates onset and maintenance of allergic responses mediated by T-helper type 2 cells. Probable substrate recognition component of a SCF-like ECS (Elongin BC-CUL2/5-SOCS-box protein) E3 ubiquitin-protein ligase complex which mediates the ubiquitination and subsequent proteasomal degradation of target proteins. The sequence is that of Suppressor of cytokine signaling 3 from Rattus norvegicus (Rat).